We begin with the raw amino-acid sequence, 141 residues long: D-aminoacyl-tRNA deacylase (141 aa).

The short motif at 133-134 (GP) is the Gly-cisPro motif, important for rejection of L-amino acids element.

The protein belongs to the DTD family. In terms of assembly, homodimer.

The protein resides in the cytoplasm. It carries out the reaction glycyl-tRNA(Ala) + H2O = tRNA(Ala) + glycine + H(+). The catalysed reaction is a D-aminoacyl-tRNA + H2O = a tRNA + a D-alpha-amino acid + H(+). An aminoacyl-tRNA editing enzyme that deacylates mischarged D-aminoacyl-tRNAs. Also deacylates mischarged glycyl-tRNA(Ala), protecting cells against glycine mischarging by AlaRS. Acts via tRNA-based rather than protein-based catalysis; rejects L-amino acids rather than detecting D-amino acids in the active site. By recycling D-aminoacyl-tRNA to D-amino acids and free tRNA molecules, this enzyme counteracts the toxicity associated with the formation of D-aminoacyl-tRNA entities in vivo and helps enforce protein L-homochirality. The polypeptide is D-aminoacyl-tRNA deacylase (Streptomyces coelicolor (strain ATCC BAA-471 / A3(2) / M145)).